The chain runs to 113 residues: UPF0145 protein TK1926 (113 aa).

It belongs to the UPF0145 family.

The polypeptide is UPF0145 protein TK1926 (Thermococcus kodakarensis (strain ATCC BAA-918 / JCM 12380 / KOD1) (Pyrococcus kodakaraensis (strain KOD1))).